The following is a 377-amino-acid chain: F-box protein At4g00755 (377 aa).

The F-box domain occupies 7-47 (LDTDTSLSILSCLDDPSDIVRASAVSRSWRQFVVKYSLSKN).

The chain is F-box protein At4g00755 from Arabidopsis thaliana (Mouse-ear cress).